Here is a 1376-residue protein sequence, read N- to C-terminus: DNA-directed RNA polymerase subunit beta (1376 aa).

This sequence belongs to the RNA polymerase beta chain family. The RNAP catalytic core consists of 2 alpha, 1 beta, 1 beta' and 1 omega subunit. When a sigma factor is associated with the core the holoenzyme is formed, which can initiate transcription.

The catalysed reaction is RNA(n) + a ribonucleoside 5'-triphosphate = RNA(n+1) + diphosphate. Functionally, DNA-dependent RNA polymerase catalyzes the transcription of DNA into RNA using the four ribonucleoside triphosphates as substrates. The polypeptide is DNA-directed RNA polymerase subunit beta (Methylorubrum extorquens (strain PA1) (Methylobacterium extorquens)).